We begin with the raw amino-acid sequence, 127 residues long: MNFSGKYQVQTQENYEAFMKAVGMPDDIIQKGKDIKGVSEIVQNGKHFKFIITAGSKVIQNEFTLGEECEMEFMTGEKIKAVVQQEGDNKLVTTFKGIKSVTEFNGDTVTSTMTKGDVVFKRVSKRI.

At methionine 1 the chain carries N-acetylmethionine. Residues lysine 31 and lysine 36 each carry the N6-succinyllysine modification. A Phosphoserine modification is found at serine 39. Residue lysine 46 is modified to N6-succinyllysine. Position 56 is a phosphoserine (serine 56). Lysine 57, lysine 78, and lysine 90 each carry N6-succinyllysine. Residue serine 100 is modified to Phosphoserine. Asparagine 105 carries the deamidated asparagine; alternate modification. The segment at residues 105 to 106 (NG) is a cross-link (isoaspartyl glycine isopeptide (Asn-Gly); alternate). At lysine 121 the chain carries N6-succinyllysine.

This sequence belongs to the calycin superfamily. Fatty-acid binding protein (FABP) family. Monomer. Post-translationally, deamidation and transpeptidation at the beta carboxyl of Asn-105 forms an isoaspartyl residue and Edman degradation appears as though blocked. This rearrangement gives rise to an extra negative charge carried by the acid form.

Its subcellular location is the cytoplasm. Functionally, plays a role in lipoprotein-mediated cholesterol uptake in hepatocytes. Binds cholesterol. Binds free fatty acids and their coenzyme A derivatives, bilirubin, and some other small molecules in the cytoplasm. May be involved in intracellular lipid transport. The chain is Fatty acid-binding protein, liver (FABP1) from Bos taurus (Bovine).